Here is a 150-residue protein sequence, read N- to C-terminus: Deoxyuridine 5'-triphosphate nucleotidohydrolase (150 aa).

Substrate is bound by residues 67–69 (RSS), asparagine 80, and 84–86 (VID).

Belongs to the dUTPase family. Mg(2+) is required as a cofactor.

The catalysed reaction is dUTP + H2O = dUMP + diphosphate + H(+). It participates in pyrimidine metabolism; dUMP biosynthesis; dUMP from dCTP (dUTP route): step 2/2. Its function is as follows. This enzyme is involved in nucleotide metabolism: it produces dUMP, the immediate precursor of thymidine nucleotides and it decreases the intracellular concentration of dUTP so that uracil cannot be incorporated into DNA. The sequence is that of Deoxyuridine 5'-triphosphate nucleotidohydrolase (dut) from Lactococcus lactis subsp. lactis (strain IL1403) (Streptococcus lactis).